The sequence spans 284 residues: Protein pxr1 (284 aa).

The 47-residue stretch at 25–71 (TNRLGFKLLSSYGWVNGNGLGEKQHGRIHNIKVSLKDDTLGIGAKAT) folds into the G-patch domain. The tract at residues 149 to 253 (DEDRVCEDAS…KVKEGNRPAS (105 aa)) is disordered. Phosphoserine is present on residues Ser159 and Ser160. Composition is skewed to basic residues over residues 166–181 (EKRK…KKKT) and 196–206 (TKKKKKEHKKK). Composition is skewed to basic and acidic residues over residues 207–224 (DKES…DKEE) and 233–249 (KDKP…KEGN).

It belongs to the PINX1 family.

Its subcellular location is the nucleus. The protein resides in the nucleolus. In terms of biological role, involved in rRNA-processing at A0, A1 and A2 sites and negatively regulates telomerase. In Schizosaccharomyces pombe (strain 972 / ATCC 24843) (Fission yeast), this protein is Protein pxr1 (pxr1).